The sequence spans 162 residues: Dihydrofolate reductase type 3 (162 aa).

The region spanning 2-160 (LISLIAALAH…YACEFVTLSR (159 aa)) is the DHFR domain.

It belongs to the dihydrofolate reductase family. As to quaternary structure, monomer.

The enzyme catalyses (6S)-5,6,7,8-tetrahydrofolate + NADP(+) = 7,8-dihydrofolate + NADPH + H(+). Its pathway is cofactor biosynthesis; tetrahydrofolate biosynthesis; 5,6,7,8-tetrahydrofolate from 7,8-dihydrofolate: step 1/1. In terms of biological role, key enzyme in folate metabolism. Catalyzes an essential reaction for de novo glycine and purine synthesis, and for DNA precursor synthesis. This Salmonella typhimurium protein is Dihydrofolate reductase type 3 (dhfrIII).